The following is a 104-amino-acid chain: Flagellar hook-basal body complex protein FliE (104 aa).

The protein belongs to the FliE family.

It localises to the bacterial flagellum basal body. The chain is Flagellar hook-basal body complex protein FliE from Pectobacterium atrosepticum (strain SCRI 1043 / ATCC BAA-672) (Erwinia carotovora subsp. atroseptica).